The chain runs to 278 residues: Elongation factor Ts (278 aa).

The tract at residues 82–85 (TDFV) is involved in Mg(2+) ion dislocation from EF-Tu.

Belongs to the EF-Ts family.

Its subcellular location is the cytoplasm. Its function is as follows. Associates with the EF-Tu.GDP complex and induces the exchange of GDP to GTP. It remains bound to the aminoacyl-tRNA.EF-Tu.GTP complex up to the GTP hydrolysis stage on the ribosome. The polypeptide is Elongation factor Ts (tsf) (Streptomyces ramocissimus).